A 93-amino-acid polypeptide reads, in one-letter code: Large ribosomal subunit protein uL23cz/uL23cy (93 aa).

It belongs to the universal ribosomal protein uL23 family. As to quaternary structure, part of the 50S ribosomal subunit.

The protein localises to the plastid. It is found in the chloroplast. In terms of biological role, binds to 23S rRNA. The chain is Large ribosomal subunit protein uL23cz/uL23cy (rpl23-A) from Cucumis sativus (Cucumber).